Here is a 517-residue protein sequence, read N- to C-terminus: AAA ATPase forming ring-shaped complexes (517 aa).

Residues 25 to 53 (ARNAKLVELLQASRTKLEEINGRLEALAE) are a coiled coil. 233-238 (GNGKTL) serves as a coordination point for ATP.

It belongs to the AAA ATPase family. Homohexamer. Assembles into a hexameric ring structure.

The polypeptide is AAA ATPase forming ring-shaped complexes (Corynebacterium jeikeium (strain K411)).